The sequence spans 790 residues: Serine/threonine-protein kinase DCLK3 (790 aa).

Residues 1–37 are disordered; that stretch reads MPAAPVLRPPPPPATPAPPAPSRPAPPIPGHRGPCDH. The span at 7 to 29 shows a compositional bias: pro residues; the sequence is LRPPPPPATPAPPAPSRPAPPIP. In terms of domain architecture, Doublecortin spans 97-183; sequence RVVTVVKLGG…KEPLTLKSIQ (87 aa). A compositionally biased stretch (low complexity) spans 201–218; sequence HSRVPSPRLRSRLPSKLL. 2 disordered regions span residues 201–290 and 315–506; these read HSRV…SGEK and LQLG…KGII. Basic and acidic residues-rich tracts occupy residues 332–345, 352–400, 425–434, and 457–496; these read DLGR…EKLV, RPSE…ESQD, IDMRREDRHT, and TRGE…ERPS. One can recognise a Protein kinase domain in the interval 514 to 771; it reads YDIGGVIGDG…AEQVLQHPWI (258 aa). Residues 520–528 and K543 each bind ATP; that span reads IGDGNFATV. Catalysis depends on D635, which acts as the Proton acceptor.

Belongs to the protein kinase superfamily. CAMK Ser/Thr protein kinase family. CaMK subfamily. In terms of tissue distribution, highly expressed in brain and to a lower extent in liver and kidney.

Its subcellular location is the cytoplasm. The protein localises to the nucleus. It catalyses the reaction L-seryl-[protein] + ATP = O-phospho-L-seryl-[protein] + ADP + H(+). The catalysed reaction is L-threonyl-[protein] + ATP = O-phospho-L-threonyl-[protein] + ADP + H(+). This Mus musculus (Mouse) protein is Serine/threonine-protein kinase DCLK3 (Dclk3).